The sequence spans 697 residues: Trishanku (697 aa).

Residues methionine 1 to aspartate 94 are disordered. Residues asparagine 12 to asparagine 47 are compositionally biased toward low complexity. Residues lysine 58–leucine 72 show a composition bias toward polar residues. Over residues asparagine 73 to asparagine 91 the composition is skewed to low complexity. The region spanning serine 122–tyrosine 189 is the BTB domain. The tract at residues isoleucine 311–serine 455 is disordered. Over residues glutamine 312–lysine 331 the composition is skewed to low complexity. Over residues serine 332 to lysine 344 the composition is skewed to basic residues. Low complexity predominate over residues glycine 353–arginine 363. Acidic residues predominate over residues aspartate 416 to glutamate 453.

Expressed strongly in presumptive spore (prespore or psp) cells during the late G2 phase of cell cycle. Present at a low level in vegetative cells.

In terms of biological role, required for normal morphogenesis and cell-type stability. The chain is Trishanku (triA) from Dictyostelium discoideum (Social amoeba).